The following is a 204-amino-acid chain: Peptidyl-tRNA hydrolase 2 (204 aa).

Y37 lines the tRNA pocket. H42 serves as the catalytic Proton acceptor. TRNA contacts are provided by F86, N88, and N134.

It belongs to the PTH family. In terms of assembly, monomer.

The protein resides in the cytoplasm. It carries out the reaction an N-acyl-L-alpha-aminoacyl-tRNA + H2O = an N-acyl-L-amino acid + a tRNA + H(+). Functionally, hydrolyzes ribosome-free peptidyl-tRNAs (with 1 or more amino acids incorporated), which drop off the ribosome during protein synthesis, or as a result of ribosome stalling. Catalyzes the release of premature peptidyl moieties from peptidyl-tRNA molecules trapped in stalled 50S ribosomal subunits, and thus maintains levels of free tRNAs and 50S ribosomes. This is Peptidyl-tRNA hydrolase 2 from Corynebacterium glutamicum (strain ATCC 13032 / DSM 20300 / JCM 1318 / BCRC 11384 / CCUG 27702 / LMG 3730 / NBRC 12168 / NCIMB 10025 / NRRL B-2784 / 534).